A 350-amino-acid chain; its full sequence is Legumin K (350 aa).

Disordered stretches follow at residues 37 to 86 (LGGN…GNSV) and 102 to 170 (EEDT…RKNG). Composition is skewed to basic and acidic residues over residues 104-118 (DTAK…ERSQ), 141-150 (EQSHSHSHRE), and 160-170 (EKQRSEERKNG). In terms of domain architecture, Cupin type-1 spans 182-329 (ENIADAAGAD…AFGLRQRQVT (148 aa)).

The protein belongs to the 11S seed storage protein (globulins) family. In terms of assembly, hexamer; each subunit is composed of an acidic and a basic chain derived from a single precursor and linked by a disulfide bond.

This protein found in the seeds of many leguminous and non-leguminous plants is the source of sulfur-containing amino acids in seed meals. The polypeptide is Legumin K (LEGK) (Pisum sativum (Garden pea)).